The sequence spans 756 residues: Subtilisin-like protease SBT3.9 (756 aa).

Positions 1–25 (MSKTILFLALFLSIVLNVQISFVVA) are cleaved as a signal peptide. The propeptide at 26 to 108 (ESKVYVVYLG…VIPNTLYEMT (83 aa)) is activation peptide. The region spanning 29–106 (VYVVYLGEKE…VQVIPNTLYE (78 aa)) is the Inhibitor I9 domain. The region spanning 112–603 (TWDYLGVSPG…GGLINPEKAV (492 aa)) is the Peptidase S8 domain. Residue Asp-142 is the Charge relay system of the active site. N-linked (GlcNAc...) asparagine glycans are attached at residues Asn-175 and Asn-202. His-218 functions as the Charge relay system in the catalytic mechanism. N-linked (GlcNAc...) asparagine glycans are attached at residues Asn-233, Asn-357, Asn-395, and Asn-519. In terms of domain architecture, PA spans 386-460 (DCEKLSANPN…ELGTDILFYI (75 aa)). Ser-534 functions as the Charge relay system in the catalytic mechanism.

It belongs to the peptidase S8 family.

The protein resides in the secreted. The polypeptide is Subtilisin-like protease SBT3.9 (Arabidopsis thaliana (Mouse-ear cress)).